A 419-amino-acid polypeptide reads, in one-letter code: Protein-lysine N-methyltransferase EFM2 (419 aa).

S-adenosyl-L-methionine contacts are provided by residues W222, 261-263 (GAG), D290, W318, and A340.

The protein belongs to the class I-like SAM-binding methyltransferase superfamily. METTL21 family.

It is found in the cytoplasm. S-adenosyl-L-methionine-dependent protein-lysine N-methyltransferase that mono- and dimethylates elongation factor 2 (EFT1/EFT2) at 'Lys-613' and methylates elongation factor 3A (YEF3). The sequence is that of Protein-lysine N-methyltransferase EFM2 from Saccharomyces cerevisiae (strain ATCC 204508 / S288c) (Baker's yeast).